The sequence spans 488 residues: Pup--protein ligase (488 aa).

A Mg(2+)-binding site is contributed by glutamate 33. Residue arginine 76 participates in ATP binding. Tyrosine 78 is a binding site for Mg(2+). Aspartate 80 functions as the Proton acceptor in the catalytic mechanism. Glutamate 86 contacts Mg(2+). 2 residues coordinate ATP: threonine 89 and tryptophan 453.

This sequence belongs to the Pup ligase/Pup deamidase family. Pup-conjugating enzyme subfamily.

The enzyme catalyses ATP + [prokaryotic ubiquitin-like protein]-L-glutamate + [protein]-L-lysine = ADP + phosphate + N(6)-([prokaryotic ubiquitin-like protein]-gamma-L-glutamyl)-[protein]-L-lysine.. It functions in the pathway protein degradation; proteasomal Pup-dependent pathway. The protein operates within protein modification; protein pupylation. Catalyzes the covalent attachment of the prokaryotic ubiquitin-like protein modifier Pup to the proteasomal substrate proteins, thereby targeting them for proteasomal degradation. This tagging system is termed pupylation. The ligation reaction involves the side-chain carboxylate of the C-terminal glutamate of Pup and the side-chain amino group of a substrate lysine. The sequence is that of Pup--protein ligase from Bifidobacterium adolescentis (strain ATCC 15703 / DSM 20083 / NCTC 11814 / E194a).